A 366-amino-acid polypeptide reads, in one-letter code: DNA-directed RNA polymerase II subunit GRINL1A (366 aa).

A disordered region spans residues 1–23; that stretch reads MFSLPRGFEPPAPEDLGRQSSAE. Residues 15–39 adopt a coiled-coil conformation; sequence DLGRQSSAELRERLRRQERLLRNEK. The interval 29 to 68 is important for transcription repressor activity; that stretch reads RRQERLLRNEKFICKLPDKGKKISDTVAKLKAAISEREEV. Disordered regions lie at residues 88–140, 158–182, 201–225, and 237–280; these read ATTR…HRGN, IRAR…QEEE, ADQS…ETPK, and ARNP…RRAR. Basic and acidic residues predominate over residues 90–100; the sequence is TRADTDVDKAQ. The span at 101-127 shows a compositional bias: low complexity; the sequence is SSDLMLDTSSLDPDCSSIDIKSSKSTS. Residues 225-296 are interaction with Pol II; it reads KKPHYMKVLE…TAARLLPLHH (72 aa). The segment covering 251 to 272 has biased composition (polar residues); that stretch reads VLPTQQSDSPSHCQRGQSPASS. The residue at position 268 (Ser-268) is a Phosphoserine. The segment at 297–312 is important for transcription repressor activity; sequence LPAQLLSIEESLALQR. The stretch at 299 to 333 forms a coiled coil; it reads AQLLSIEESLALQREQKQNYEEMQAKLAAQKLAER. The interval 313-338 is interaction with Pol II; that stretch reads EQKQNYEEMQAKLAAQKLAERLNIKM. Positions 338–366 are disordered; sequence MQSYNPEGESSGRYREVRDEADAQSSDEC. Over residues 347–358 the composition is skewed to basic and acidic residues; it reads SSGRYREVRDEA.

The protein belongs to the GRINL1 family. Component of the Pol II(G) complex, which contains the RNA polymerase II (Pol II) core complex subunits and POLR2M isoform 1. Pol II(G) appears to be an abundant form of Pol II. Post-translationally, dephosphorylated at Ser-268 by the PNUTS-PP1 complex, promoting RNA polymerase II transcription pause-release.

The protein resides in the nucleus. Appears to be a stable component of the Pol II(G) complex form of RNA polymerase II (Pol II). Pol II synthesizes mRNA precursors and many functional non-coding RNAs and is the central component of the basal RNA polymerase II transcription machinery. May play a role in the Mediator complex-dependent regulation of transcription activation. Acts as a negative regulator of transcriptional activation; this repression is relieved by the Mediator complex, which restores Pol II(G) activator-dependent transcription to a level equivalent to that of Pol II. The protein is DNA-directed RNA polymerase II subunit GRINL1A (Polr2m) of Mus musculus (Mouse).